The chain runs to 208 residues: Outer-membrane lipoprotein carrier protein (208 aa).

Residues 1–25 form the signal peptide; that stretch reads MKKRFSAKLFSALVLSISFFSAANA.

It belongs to the LolA family. Monomer.

The protein resides in the periplasm. Participates in the translocation of lipoproteins from the inner membrane to the outer membrane. Only forms a complex with a lipoprotein if the residue after the N-terminal Cys is not an aspartate (The Asp acts as a targeting signal to indicate that the lipoprotein should stay in the inner membrane). This Vibrio parahaemolyticus serotype O3:K6 (strain RIMD 2210633) protein is Outer-membrane lipoprotein carrier protein.